The chain runs to 991 residues: Valine--tRNA ligase (991 aa).

A 'HIGH' region motif is present at residues 43-53 (PNVTGTLHMGH). The 'KMSKS' region signature appears at 582–586 (KMSKS). Position 585 (Lys585) interacts with ATP. Residues 689 to 711 (AHSPAQHQAGQDGQDAPRTPQPR) are disordered. The segment covering 693-704 (AQHQAGQDGQDA) has biased composition (low complexity). Positions 925–988 (LIDVDAERAR…TQLNGLRERR (64 aa)) form a coiled coil.

The protein belongs to the class-I aminoacyl-tRNA synthetase family. ValS type 1 subfamily. Monomer.

The protein localises to the cytoplasm. The enzyme catalyses tRNA(Val) + L-valine + ATP = L-valyl-tRNA(Val) + AMP + diphosphate. Catalyzes the attachment of valine to tRNA(Val). As ValRS can inadvertently accommodate and process structurally similar amino acids such as threonine, to avoid such errors, it has a 'posttransfer' editing activity that hydrolyzes mischarged Thr-tRNA(Val) in a tRNA-dependent manner. This chain is Valine--tRNA ligase, found in Xylella fastidiosa (strain M12).